The following is a 441-amino-acid chain: 3-phosphoshikimate 1-carboxyvinyltransferase (441 aa).

Residues 1 to 21 (MSANGPSHPARELKAGGSLSG) form a disordered region. 3-phosphoshikimate-binding residues include Lys-29, Ser-30, and Arg-34. Lys-29 is a phosphoenolpyruvate binding site. Residues Gly-103 and Arg-132 each coordinate phosphoenolpyruvate. Ser-177, Gln-179, Asp-328, and Lys-355 together coordinate 3-phosphoshikimate. Gln-179 contributes to the phosphoenolpyruvate binding site. The active-site Proton acceptor is the Asp-328. The phosphoenolpyruvate site is built by Arg-359 and Arg-401.

This sequence belongs to the EPSP synthase family. As to quaternary structure, monomer.

The protein localises to the cytoplasm. The enzyme catalyses 3-phosphoshikimate + phosphoenolpyruvate = 5-O-(1-carboxyvinyl)-3-phosphoshikimate + phosphate. The protein operates within metabolic intermediate biosynthesis; chorismate biosynthesis; chorismate from D-erythrose 4-phosphate and phosphoenolpyruvate: step 6/7. Functionally, catalyzes the transfer of the enolpyruvyl moiety of phosphoenolpyruvate (PEP) to the 5-hydroxyl of shikimate-3-phosphate (S3P) to produce enolpyruvyl shikimate-3-phosphate and inorganic phosphate. This chain is 3-phosphoshikimate 1-carboxyvinyltransferase, found in Parasynechococcus marenigrum (strain WH8102).